Consider the following 80-residue polypeptide: uncharacterized protein (80 aa).

The first 15 residues, 1 to 15 (MEVIVVIVVIVVVIA), serve as a signal peptide directing secretion. Residues 23–44 (NSNSNSNNSSDSSNESNNSDSS) show a composition bias toward low complexity. The disordered stretch occupies residues 23–52 (NSNSNSNNSSDSSNESNNSDSSKNGGSDIY). N-linked (GlcNAc...) asparagine glycans are attached at residues N29, N30, N36, N39, and N64.

The protein localises to the secreted. This is an uncharacterized protein from Dictyostelium discoideum (Social amoeba).